We begin with the raw amino-acid sequence, 323 residues long: Mycothiol acetyltransferase (323 aa).

Glu44 contributes to the 1D-myo-inositol 2-(L-cysteinylamino)-2-deoxy-alpha-D-glucopyranoside binding site. Acetyl-CoA is bound at residue 98-100 (LAV). Residues 173 to 323 (VSLRAFIPGQ…DVMYGPKNGG (151 aa)) form the N-acetyltransferase domain. 1D-myo-inositol 2-(L-cysteinylamino)-2-deoxy-alpha-D-glucopyranoside contacts are provided by Glu200, Lys240, and Glu253. Acetyl-CoA-binding positions include 257-259 (VGV) and 264-270 (QGMGLGK). Residue Tyr291 coordinates 1D-myo-inositol 2-(L-cysteinylamino)-2-deoxy-alpha-D-glucopyranoside.

The protein belongs to the acetyltransferase family. MshD subfamily. In terms of assembly, monomer.

It carries out the reaction 1D-myo-inositol 2-(L-cysteinylamino)-2-deoxy-alpha-D-glucopyranoside + acetyl-CoA = mycothiol + CoA + H(+). In terms of biological role, catalyzes the transfer of acetyl from acetyl-CoA to desacetylmycothiol (Cys-GlcN-Ins) to form mycothiol. This is Mycothiol acetyltransferase from Arthrobacter sp. (strain FB24).